The primary structure comprises 336 residues: GTPase Obg (336 aa).

Positions 1-159 (MKFVDSATVF…LELAMELKLM (159 aa)) constitute an Obg domain. The disordered stretch occupies residues 120 to 143 (GGHGGRGNQHFATSTNQAPRRSEP). The span at 129–138 (HFATSTNQAP) shows a compositional bias: polar residues. The OBG-type G domain maps to 160-323 (ADVGLVGFPN…LKDELWRQVS (164 aa)). GTP is bound by residues 166 to 173 (GFPNAGKS), 191 to 195 (FTTLV), 213 to 216 (DIPG), 280 to 283 (TKMD), and 304 to 306 (SSV). Mg(2+)-binding residues include Ser-173 and Thr-193.

This sequence belongs to the TRAFAC class OBG-HflX-like GTPase superfamily. OBG GTPase family. Monomer. Mg(2+) serves as cofactor.

It is found in the cytoplasm. Its function is as follows. An essential GTPase which binds GTP, GDP and possibly (p)ppGpp with moderate affinity, with high nucleotide exchange rates and a fairly low GTP hydrolysis rate. Plays a role in control of the cell cycle, stress response, ribosome biogenesis and in those bacteria that undergo differentiation, in morphogenesis control. The chain is GTPase Obg from Chlorobium phaeovibrioides (strain DSM 265 / 1930) (Prosthecochloris vibrioformis (strain DSM 265)).